Here is a 412-residue protein sequence, read N- to C-terminus: Alpha-1-antitrypsin 1-3 (412 aa).

The N-terminal stretch at 1 to 24 is a signal peptide; it reads MTPSISWGLLLLAGLCCLVPSFLA. N-linked (GlcNAc...) asparagine glycans are attached at residues Asn64, Asn101, and Asn265. Positions 368–387 are RCL; it reads AVTVLLAVPYSMPPILRFDH.

It belongs to the serpin family.

The protein resides in the secreted. Functionally, inhibitor of serine proteases. Can inhibit trypsin and chymotrypsin; relatively ineffective against elastase. This is Alpha-1-antitrypsin 1-3 (Serpina1c) from Mus musculus (Mouse).